The chain runs to 178 residues: Plasmid transfer protein TraF (178 aa).

The first 30 residues, 1–30, serve as a signal peptide directing secretion; that stretch reads MSRILKRIAAGVVIAGVAALLLAAGGYAAG.

The protein belongs to the peptidase S26C family.

It localises to the periplasm. In terms of biological role, required for donor-specific phage sensitivity. May be involved in pilus assembly. This Escherichia coli protein is Plasmid transfer protein TraF (traF).